A 192-amino-acid polypeptide reads, in one-letter code: Transposon Tn552 DNA-invertase BinR (192 aa).

The region spanning 1 to 136 (MKIGYARVST…AGRIAARARG (136 aa)) is the Resolvase/invertase-type recombinase catalytic domain. Ser-9 (O-(5'-phospho-DNA)-serine intermediate) is an active-site residue. A DNA-binding region (H-T-H motif) is located at residues 163 to 182 (IKTIAEQWKVSRTTIYRYLN).

It belongs to the site-specific recombinase resolvase family.

Its function is as follows. DNA-invertase, mediating the inversion of inv. This is Transposon Tn552 DNA-invertase BinR (resR) from Staphylococcus aureus.